The sequence spans 593 residues: METPPLPPACTKQGHQKPLDSKDENPEKHCPLTVNPWHMKKAFKVMNELRSQNLLCDVTIVAEDMEIPAHRVVLAACSPYFHAMFTGEMSESRAKRVRIKEVDGWTLRMLVDYVYTAEIQVTEENVQVLLPAAGLLQLQDVKKTCCEFLESQLHPVNCLGIRAFADMHACTDLLNKANTYAEQHFADVVLSEEFLNLGIEQVCSLISSDKLTISSEEKVFEAVIAWVNHDKDVRQEFMARLMEHVRLPLLPREYLVQRVEEEALVKNSSACKDYLIEAMKYHLLPTEQRMLMKSVRTRLRTPMNLPKLMVVVGGQAPKAIRSVECYDFKEERWHQVAELPSRRCRAGMVYMAGLVFAVGGFNGSLRVRTVDSYDPVKDQWTSVANMRDRRSTLGAAVLNGLLYAVGGFDGSTGLSSVEAYNIKSNEWFHVAPMNTRRSSVGVGVVGGLLYAVGGYDGASRQCLSTVECYNATANEWTYIAEMSTRRSGAGVGVLNNLLYAVGGHDGPLVRKSVEVYDPTTNAWRQVADMNMCRRNAGVCAVNGLLYVVGGDDGSCNLASVEYYNPTTDKWTVVSSCMSTGRSYAGVTVIDKPL.

Residues 1–29 form a disordered region; that stretch reads METPPLPPACTKQGHQKPLDSKDENPEKH. Basic and acidic residues predominate over residues 17-29; that stretch reads KPLDSKDENPEKH. Residues 56 to 123 form the BTB domain; sequence CDVTIVAEDM…VYTAEIQVTE (68 aa). Kelch repeat units follow at residues 308–353, 354–400, 402–447, 449–496, 497–543, and 545–591; these read LMVV…YMAG, LVFA…VLNG, LYAV…VVGG, LYAV…VLNN, LLYA…AVNG, and LYVV…VIDK.

Component of the BCR(KLHL2) E3 ubiquitin ligase complex, at least composed of CUL3 and KLHL2 and RBX1. Binds actin. Interacts with KLHL12. Interacts (via N-terminus) with FYN (via SH3 domain).

Its subcellular location is the cytoplasm. It is found in the cytoskeleton. The protein resides in the cell projection. It localises to the ruffle. The protein localises to the lamellipodium. Its subcellular location is the cytosol. Its pathway is protein modification; protein ubiquitination. In terms of biological role, substrate-specific adapter of a BCR (BTB-CUL3-RBX1) E3 ubiquitin ligase complex that mediates the ubiquitination of target proteins, such as NPTXR, WNK1, WNK3 and WNK4, leading most often to their proteasomal degradation. The BCR(KLHL2) complex catalyzes ubiquitination and degradation of NPTXR. Responsible for degradative ubiquitination of the WNK kinases WNK1, WNK3 and WNK4. Plays a role in the reorganization of the actin cytoskeleton. Promotes growth of cell projections in oligodendrocyte precursors. This Mus musculus (Mouse) protein is Kelch-like protein 2.